Consider the following 350-residue polypeptide: Ribosomal RNA large subunit methyltransferase M (350 aa).

S-adenosyl-L-methionine is bound by residues Ser-184, Ala-217 to Gly-220, Asp-236, Asp-256, and Asp-272. The Proton acceptor role is filled by Lys-301.

The protein belongs to the class I-like SAM-binding methyltransferase superfamily. RNA methyltransferase RlmE family. RlmM subfamily. Monomer.

It localises to the cytoplasm. It catalyses the reaction cytidine(2498) in 23S rRNA + S-adenosyl-L-methionine = 2'-O-methylcytidine(2498) in 23S rRNA + S-adenosyl-L-homocysteine + H(+). Its function is as follows. Catalyzes the 2'-O-methylation at nucleotide C2498 in 23S rRNA. The chain is Ribosomal RNA large subunit methyltransferase M from Marinomonas sp. (strain MWYL1).